The following is a 248-amino-acid chain: MLVIISSAKTLNFEKLALKTELTTSIFPNLTNQLLSTLQSYSENQLSEIMNISTKLAHINKERFKDFNNQESKAAIFAYAGDVFNNIHVEKLTNHELNFLQSHLLIISGLYGALKPLDAIKPYRLEMTTKLNEINLTSFWQDEITDYINKVLAKHENKYLLNLASQEYSSVVNPNKLKYQLVNIHFKENRDGKLSTIGINAKKARGAMVNVIANNLIDSPELLKNFPYLGYEFSPKHSSDSELVFIKE.

It belongs to the UPF0246 family.

The sequence is that of UPF0246 protein RF_0769 from Rickettsia felis (strain ATCC VR-1525 / URRWXCal2) (Rickettsia azadi).